The following is a 388-amino-acid chain: Succinate--CoA ligase [ADP-forming] subunit beta (388 aa).

The ATP-grasp domain maps to 9–244 (KQLFAEFGLP…PSQEDEREAH (236 aa)). ATP contacts are provided by residues Lys-46, 53-55 (GRG), Glu-99, Ser-102, and Glu-107. 2 residues coordinate Mg(2+): Asn-199 and Asp-213. Substrate-binding positions include Asn-264 and 321–323 (GIV).

It belongs to the succinate/malate CoA ligase beta subunit family. In terms of assembly, heterotetramer of two alpha and two beta subunits. Mg(2+) is required as a cofactor.

It catalyses the reaction succinate + ATP + CoA = succinyl-CoA + ADP + phosphate. The enzyme catalyses GTP + succinate + CoA = succinyl-CoA + GDP + phosphate. The protein operates within carbohydrate metabolism; tricarboxylic acid cycle; succinate from succinyl-CoA (ligase route): step 1/1. Functionally, succinyl-CoA synthetase functions in the citric acid cycle (TCA), coupling the hydrolysis of succinyl-CoA to the synthesis of either ATP or GTP and thus represents the only step of substrate-level phosphorylation in the TCA. The beta subunit provides nucleotide specificity of the enzyme and binds the substrate succinate, while the binding sites for coenzyme A and phosphate are found in the alpha subunit. In Aliivibrio fischeri (strain ATCC 700601 / ES114) (Vibrio fischeri), this protein is Succinate--CoA ligase [ADP-forming] subunit beta.